The primary structure comprises 347 residues: NADH-ubiquinone oxidoreductase chain 2 (347 aa).

11 helical membrane-spanning segments follow: residues 2–22 (LSPL…LVTF), 26–46 (SWIL…PLMA), 60–80 (YFIA…LAAW), 94–114 (IILN…PMHF), 127–147 (TGMI…IQIA), 151–171 (NNAF…WGGL), 179–197 (IIAY…MAPF), 201–223 (ITWV…LNTL), 242–262 (MLLL…GFTN), 274–294 (NLVI…FFYT), and 325–345 (LMTM…AIFI).

The protein belongs to the complex I subunit 2 family.

It localises to the mitochondrion inner membrane. It carries out the reaction a ubiquinone + NADH + 5 H(+)(in) = a ubiquinol + NAD(+) + 4 H(+)(out). Core subunit of the mitochondrial membrane respiratory chain NADH dehydrogenase (Complex I) that is believed to belong to the minimal assembly required for catalysis. Complex I functions in the transfer of electrons from NADH to the respiratory chain. The immediate electron acceptor for the enzyme is believed to be ubiquinone. This chain is NADH-ubiquinone oxidoreductase chain 2 (MT-ND2), found in Lampetra fluviatilis (European river lamprey).